A 61-amino-acid polypeptide reads, in one-letter code: Small ribosomal subunit protein eS31 (61 aa).

Positions 22, 25, 38, and 41 each coordinate Zn(2+). The C4-type zinc-finger motif lies at Cys22–Cys41.

This sequence belongs to the eukaryotic ribosomal protein eS31 family. In terms of assembly, part of the 30S ribosomal subunit. It depends on Zn(2+) as a cofactor.

This is Small ribosomal subunit protein eS31 from Nanoarchaeum equitans (strain Kin4-M).